A 226-amino-acid chain; its full sequence is uncharacterized protein (226 aa).

The protein belongs to the HisA/HisF family.

This is an uncharacterized protein from Methanocaldococcus jannaschii (strain ATCC 43067 / DSM 2661 / JAL-1 / JCM 10045 / NBRC 100440) (Methanococcus jannaschii).